The following is a 136-amino-acid chain: Large ribosomal subunit protein uL16 (136 aa).

Belongs to the universal ribosomal protein uL16 family. Part of the 50S ribosomal subunit.

Binds 23S rRNA and is also seen to make contacts with the A and possibly P site tRNAs. The chain is Large ribosomal subunit protein uL16 from Shigella flexneri.